The primary structure comprises 65 residues: Large ribosomal subunit protein uL30 (65 aa).

It belongs to the universal ribosomal protein uL30 family. In terms of assembly, part of the 50S ribosomal subunit.

The chain is Large ribosomal subunit protein uL30 from Rickettsia bellii (strain OSU 85-389).